A 524-amino-acid polypeptide reads, in one-letter code: Chitinase D (524 aa).

The signal sequence occupies residues 1–30 (MNQAVRFRPVITFALAFILIITWFAPRADA). In terms of domain architecture, Fibronectin type-III spans 95–180 (VPAGLTSSLV…TSLSVTTSTG (86 aa)). In terms of domain architecture, GH18 spans 190–514 (KWLIGYWHNF…NAHRPFLNGL (325 aa)). The active-site Proton donor is the Glu303.

This sequence belongs to the glycosyl hydrolase 18 family. Chitinase class II subfamily.

It catalyses the reaction Random endo-hydrolysis of N-acetyl-beta-D-glucosaminide (1-&gt;4)-beta-linkages in chitin and chitodextrins.. The sequence is that of Chitinase D (chiD) from Niallia circulans (Bacillus circulans).